The following is a 111-amino-acid chain: Large ribosomal subunit protein uL22 (111 aa).

It belongs to the universal ribosomal protein uL22 family. Part of the 50S ribosomal subunit.

In terms of biological role, this protein binds specifically to 23S rRNA; its binding is stimulated by other ribosomal proteins, e.g. L4, L17, and L20. It is important during the early stages of 50S assembly. It makes multiple contacts with different domains of the 23S rRNA in the assembled 50S subunit and ribosome. Its function is as follows. The globular domain of the protein is located near the polypeptide exit tunnel on the outside of the subunit, while an extended beta-hairpin is found that lines the wall of the exit tunnel in the center of the 70S ribosome. The sequence is that of Large ribosomal subunit protein uL22 from Clostridioides difficile (strain 630) (Peptoclostridium difficile).